The primary structure comprises 184 residues: UPF0398 protein BCG9842_B3730 (184 aa).

It belongs to the UPF0398 family.

The chain is UPF0398 protein BCG9842_B3730 from Bacillus cereus (strain G9842).